A 965-amino-acid polypeptide reads, in one-letter code: MLTLLNRWRSQPGGASNAAAFIRVLESPKSAVTDKVLVLKAFNDWDVLVNTWFEVADALPAVEQLLDNNTFPEHSSAALLVSKVYFCLEQYERALEFALRGDFNVVPATRTGLGNDAEYVNKIIETAIDTYKTLSKQGSGIPQKLRDLIDRIVARNLDKREIWFVISLGFETTNLAMIDRAISAMPADLTIKNQTTLVETLNRVVNGAFDRSFRFQVIDTVIKTYLKCPSPDMSKICECYVLTDNAEAAADTITSLIAKSLSTRAYQIAFDLYETASQGFLDRVLKRFQQQDARDEKSMEKIHSILKGHETVKAYLDFFVRHNHTDSVLMEEIKENIRTASAHNALLISNGLMQYGTTCDDFLRNNLNWVSKATNWNKFNAVASLGLIHHGQESSAMKVLEPYLPKESVEGFGFKEGGAMLAYGLIHAKHGDATAMSTLAQWLKTAENEPVRHGACLGFGVAGLGSSSVSNYEKVREVLQRDEAVSGESAGIAMGLIMAGHLNQEVFNELKQYTVDTQHDKTQRGIRTGLACAAFGLQGDAEPYIKEAIGAKSNPMLRSTGICMLSMAYAGTGSPDVVRRLLEKVATDPNLDVKRYATIGIGFVLSKDPSTCLSYVAMLTEHFNGHVRYGAAMALGIACAGTGNMEAIALIEPMISDKEGFVRKGALLSLALIMCQQTDYTCPKVNGFRKQLLKKIGEKNEDSLVKFGAIIAQGLLDIGGQNAAVTMQNSDKQPDMGSMVGMMCFLHGWFWHSMHFFIALAAKPSCLVMMNENLKIPVLDYICHANSQKFAYPPRAESKKDKDVKKIETVVLSITGKKNASKKLIAEEKKRREAAASASSAAAAPSSSSTSGTAPAAEDEKMEVDQPGKSKKEKAPEKDTKPLHRLQNPARVIPAQRQLISISDARAYSPMKPLYKGGIIVADRVDKEREEKLVSEVVTQVNTPASSGNTENKPHSTFEININDF.

PC repeat units lie at residues 380-413, 418-452, 454-488, 489-523, 560-595, 630-664, 665-706, and 708-738; these read NAVA…EGFG, GAML…EPVR, GACL…VSGE, SAGI…DKTQ, TGIC…DVKR, GAAM…FVRK, GALL…SLVK, and GAII…DMGS. The segment covering 836–856 has biased composition (low complexity); the sequence is ASASSAAAAPSSSSTSGTAPA. Disordered regions lie at residues 836–889 and 943–965; these read ASAS…LQNP and TPAS…INDF. The span at 863–882 shows a compositional bias: basic and acidic residues; that stretch reads EVDQPGKSKKEKAPEKDTKP.

Belongs to the proteasome subunit S1 family.

In terms of biological role, acts as a regulatory subunit of the 26 proteasome which is involved in the ATP-dependent degradation of ubiquitinated proteins. The polypeptide is 26S proteasome non-ATPase regulatory subunit 1 (rpn-2) (Caenorhabditis elegans).